The sequence spans 516 residues: Maintenance of mitochondrial morphology protein 1 (516 aa).

The Lumenal portion of the chain corresponds to 1–43; sequence MAGSTSASLQTPYFPSSTQINPVRVDHTLPLPPAQPSLSFTQG. The helical transmembrane segment at 44–64 threads the bilayer; the sequence is LLVGQLSVVLLIGAFIKFFIF. Topologically, residues 65-516 are cytoplasmic; it reads GEAPPPPSRG…GSMPDTVTET (452 aa). 4 disordered regions span residues 70 to 118, 295 to 349, 420 to 466, and 485 to 516; these read PPSR…SSST, TSDQ…SKHG, RTGL…IDRG, and GGHQ…VTET. 3 stretches are compositionally biased toward polar residues: residues 74–96, 105–118, and 295–312; these read GLSN…TDSS, STSN…SSST, and TSDQ…TTSE. The 262-residue stretch at 151–412 folds into the SMP-LTD domain; the sequence is QPESLDWFNV…EPRVQVVGLP (262 aa). Positions 449-460 are enriched in gly residues; the sequence is GVSGGGGGGGSM.

This sequence belongs to the MMM1 family. In terms of assembly, homodimer. Component of the ER-mitochondria encounter structure (ERMES) or MDM complex, composed of MMM1, MDM10, MDM12 and MDM34. An MMM1 homodimer associates with one molecule of MDM12 on each side in a pairwise head-to-tail manner, and the SMP-LTD domains of MMM1 and MDM12 generate a continuous hydrophobic tunnel for phospholipid trafficking.

Its subcellular location is the endoplasmic reticulum membrane. Component of the ERMES/MDM complex, which serves as a molecular tether to connect the endoplasmic reticulum (ER) and mitochondria. Components of this complex are involved in the control of mitochondrial shape and protein biogenesis, and function in nonvesicular lipid trafficking between the ER and mitochondria. The MDM12-MMM1 subcomplex functions in the major beta-barrel assembly pathway that is responsible for biogenesis of all outer membrane beta-barrel proteins, and acts in a late step after the SAM complex. The MDM10-MDM12-MMM1 subcomplex further acts in the TOM40-specific pathway after the action of the MDM12-MMM1 complex. Essential for establishing and maintaining the structure of mitochondria and maintenance of mtDNA nucleoids. The sequence is that of Maintenance of mitochondrial morphology protein 1 from Paracoccidioides brasiliensis (strain Pb18).